A 639-amino-acid polypeptide reads, in one-letter code: Probable potassium transport system protein Kup 1 (639 aa).

Transmembrane regions (helical) follow at residues 27–47 (AILG…LYAF), 64–84 (VIGL…FKYI), 115–135 (VLIV…MITP), 151–171 (PAMD…LFAI), 182–202 (FFGP…LIHI), 225–245 (GFYG…AEAL), 261–281 (WFCL…ALVL), 293–313 (LMFP…ATII), 351–371 (IYLP…VLTF), 377–397 (LATA…LMFF), 408–428 (IWLA…FLGA), and 430–450 (LLKI…FTVI).

It belongs to the HAK/KUP transporter (TC 2.A.72) family.

It is found in the cell inner membrane. It catalyses the reaction K(+)(in) + H(+)(in) = K(+)(out) + H(+)(out). Transport of potassium into the cell. Likely operates as a K(+):H(+) symporter. The protein is Probable potassium transport system protein Kup 1 of Agrobacterium fabrum (strain C58 / ATCC 33970) (Agrobacterium tumefaciens (strain C58)).